The following is a 315-amino-acid chain: Homoserine kinase (315 aa).

97–107 lines the ATP pocket; the sequence is PPARGLGSSAT.

It belongs to the GHMP kinase family. Homoserine kinase subfamily.

It localises to the cytoplasm. It catalyses the reaction L-homoserine + ATP = O-phospho-L-homoserine + ADP + H(+). The protein operates within amino-acid biosynthesis; L-threonine biosynthesis; L-threonine from L-aspartate: step 4/5. In terms of biological role, catalyzes the ATP-dependent phosphorylation of L-homoserine to L-homoserine phosphate. This chain is Homoserine kinase, found in Prochlorococcus marinus (strain MIT 9515).